Consider the following 514-residue polypeptide: 6-phosphofructo-2-kinase/fructose-2,6-bisphosphatase 3 (514 aa).

The interval 1–245 is 6-phosphofructo-2-kinase; sequence MPLELTQSRV…VYYLMNIHVQ (245 aa). 42–50 lines the ATP pocket; it reads GLPARGKTY. Beta-D-fructose 6-phosphate is bound by residues Arg-75 and Arg-99. Asp-125 is an active-site residue. Thr-127 and Arg-133 together coordinate beta-D-fructose 6-phosphate. Cys-155 is an active-site residue. Residue 164–169 participates in ATP binding; it reads NIMEVK. Lys-169, Arg-190, and Tyr-194 together coordinate beta-D-fructose 6-phosphate. The fructose-2,6-bisphosphatase stretch occupies residues 246-514; that stretch reads PRTIYLCRHG…QPLLGQACLT (269 aa). Arg-253 is a binding site for beta-D-fructose 2,6-bisphosphate. Residue His-254 is the Tele-phosphohistidine intermediate of the active site. Asn-260 and Gly-266 together coordinate beta-D-fructose 2,6-bisphosphate. The active-site Proton donor/acceptor is Glu-323. Residues Tyr-334, Arg-348, Lys-352, Tyr-363, Gln-389, and Arg-393 each contribute to the beta-D-fructose 2,6-bisphosphate site. Residue 345 to 348 participates in ATP binding; the sequence is YALR. ATP contacts are provided by residues 389–393 and Tyr-425; that span reads QAVLR. Positions 444-475 are disordered; sequence ERSEDAKKGPNPLMRRNSVTPLASPEPTKKPR. Ser-461 is subject to Phosphoserine; by AMPK and PKA. Thr-463 carries the phosphothreonine modification. Phosphoserine is present on Ser-467. A Phosphothreonine; by PKC modification is found at Thr-471.

This sequence in the C-terminal section; belongs to the phosphoglycerate mutase family. As to quaternary structure, homodimer. Forms a heterodimer with PFKFB2. In terms of processing, phosphorylation by AMPK stimulates activity.

The catalysed reaction is beta-D-fructose 2,6-bisphosphate + H2O = beta-D-fructose 6-phosphate + phosphate. The enzyme catalyses beta-D-fructose 6-phosphate + ATP = beta-D-fructose 2,6-bisphosphate + ADP + H(+). Its function is as follows. Catalyzes both the synthesis and degradation of fructose 2,6-bisphosphate. The polypeptide is 6-phosphofructo-2-kinase/fructose-2,6-bisphosphatase 3 (PFKFB3) (Pongo abelii (Sumatran orangutan)).